We begin with the raw amino-acid sequence, 676 residues long: RNA helicase NPH-II (676 aa).

The 176-residue stretch at 172-347 (FSAWISHRPV…VFLPNPAFIH (176 aa)) folds into the Helicase ATP-binding domain. 185 to 192 (GGTGVGKT) contributes to the ATP binding site. A DEXH box motif is present at residues 296–299 (DEVH). The Helicase C-terminal domain maps to 366 to 535 (NPSSRMAYIE…NYILYANKFN (170 aa)).

Belongs to the DEAD box helicase family. DEAH subfamily. Monomer.

The protein localises to the virion. The catalysed reaction is ATP + H2O = ADP + phosphate + H(+). Its function is as follows. NTP-dependent helicase that catalyzes unidirectional unwinding of 3'tailed duplex RNAs and plays an important role during transcription of early mRNAs, presumably by preventing R-loop formation behind the elongating RNA polymerase. Might also play a role in the export of newly synthesized mRNA chains out of the core into the cytoplasm. Required for replication and propagation of viral particles. The sequence is that of RNA helicase NPH-II (OPG084) from Homo sapiens (Human).